The primary structure comprises 260 residues: Ribonuclease HII (260 aa).

Residues 70 to 260 enclose the RNase H type-2 domain; that stretch reads QAIAGIDEVG…PIKSMLKEKN (191 aa). 3 residues coordinate a divalent metal cation: D76, E77, and D171.

The protein belongs to the RNase HII family. It depends on Mn(2+) as a cofactor. The cofactor is Mg(2+).

It localises to the cytoplasm. The enzyme catalyses Endonucleolytic cleavage to 5'-phosphomonoester.. In terms of biological role, endonuclease that specifically degrades the RNA of RNA-DNA hybrids. This Streptococcus mutans serotype c (strain ATCC 700610 / UA159) protein is Ribonuclease HII.